The sequence spans 307 residues: Ornithine carbamoyltransferase (307 aa).

Carbamoyl phosphate contacts are provided by residues 54–57, Q81, R105, and 132–135; these read STRT and HPCQ. Residues N163, D221, and 225–226 each bind L-ornithine; that span reads SM. Carbamoyl phosphate is bound by residues 261-262 and R289; that span reads CL.

This sequence belongs to the aspartate/ornithine carbamoyltransferase superfamily. OTCase family.

It is found in the cytoplasm. The enzyme catalyses carbamoyl phosphate + L-ornithine = L-citrulline + phosphate + H(+). It functions in the pathway amino-acid biosynthesis; L-arginine biosynthesis; L-arginine from L-ornithine and carbamoyl phosphate: step 1/3. In terms of biological role, reversibly catalyzes the transfer of the carbamoyl group from carbamoyl phosphate (CP) to the N(epsilon) atom of ornithine (ORN) to produce L-citrulline. This chain is Ornithine carbamoyltransferase, found in Chromobacterium violaceum (strain ATCC 12472 / DSM 30191 / JCM 1249 / CCUG 213 / NBRC 12614 / NCIMB 9131 / NCTC 9757 / MK).